The sequence spans 330 residues: Anthranilate phosphoribosyltransferase (330 aa).

5-phospho-alpha-D-ribose 1-diphosphate-binding positions include Gly75, 78-79 (GD), Thr83, 85-88 (NVST), 103-111 (KHGNRAASS), and Ala115. Gly75 serves as a coordination point for anthranilate. Ser87 serves as a coordination point for Mg(2+). Asn106 contributes to the anthranilate binding site. Anthranilate is bound at residue Arg161. Asp220 and Glu221 together coordinate Mg(2+).

This sequence belongs to the anthranilate phosphoribosyltransferase family. As to quaternary structure, homodimer. Mg(2+) is required as a cofactor.

The enzyme catalyses N-(5-phospho-beta-D-ribosyl)anthranilate + diphosphate = 5-phospho-alpha-D-ribose 1-diphosphate + anthranilate. The protein operates within amino-acid biosynthesis; L-tryptophan biosynthesis; L-tryptophan from chorismate: step 2/5. Its function is as follows. Catalyzes the transfer of the phosphoribosyl group of 5-phosphorylribose-1-pyrophosphate (PRPP) to anthranilate to yield N-(5'-phosphoribosyl)-anthranilate (PRA). This is Anthranilate phosphoribosyltransferase from Erythrobacter litoralis (strain HTCC2594).